The primary structure comprises 615 residues: Angiotensin-converting enzyme (615 aa).

The N-terminal stretch at methionine 1 to alanine 17 is a signal peptide. The 589-residue stretch at valine 19–threonine 607 folds into the Peptidase M2 domain. The N-linked (GlcNAc...) asparagine glycan is linked to asparagine 53. A disulfide bridge connects residues cysteine 133 and cysteine 141. Residues asparagine 196 and asparagine 311 are each glycosylated (N-linked (GlcNAc...) asparagine). Cysteine 336 and cysteine 354 form a disulfide bridge. Histidine 367 serves as a coordination point for Zn(2+). The active-site Proton acceptor is the glutamate 368. Residues histidine 371 and glutamate 395 each contribute to the Zn(2+) site. The Proton donor role is filled by histidine 497. A disulfide bridge links cysteine 522 with cysteine 540.

Belongs to the peptidase M2 family. Requires Zn(2+) as cofactor. In terms of processing, glycosylated. Expressed in vesicular structures in spermatocytes and early spermatids (at protein level).

The protein localises to the secreted. Its subcellular location is the extracellular space. It carries out the reaction Release of a C-terminal dipeptide, oligopeptide-|-Xaa-Yaa, when Xaa is not Pro, and Yaa is neither Asp nor Glu. Thus, conversion of angiotensin I to angiotensin II, with increase in vasoconstrictor activity, but no action on angiotensin II.. Inhibited by captopril and, to a lesser extent, by lisinopril, trandolaprilat, fosinoprilat and enalaprilat. Functionally, may be involved in the specific maturation or degradation of a number of bioactive peptides. May play a role in the contractions of the heart, gut and testes, and in spermatid differentiation. In Drosophila melanogaster (Fruit fly), this protein is Angiotensin-converting enzyme (Ance).